The primary structure comprises 509 residues: Scavenger receptor class B member 1 (509 aa).

The Cytoplasmic segment spans residues 1–11 (MGVSSRARWVA). The helical transmembrane segment at 12-32 (LGLGVLGLLCAALGVIMILMV) threads the bilayer. The Extracellular portion of the chain corresponds to 33 to 440 (PSLIKQQVLK…YTQLVLMPQV (408 aa)). 10 N-linked (GlcNAc...) asparagine glycosylation sites follow: Asn102, Asn108, Asn116, Asn173, Asn212, Asn227, Asn255, Asn310, Asn330, and Asn383. Cys251 and Cys384 are oxidised to a cystine. A helical membrane pass occupies residues 441–461 (LHYAQYVLLGLGGLLLLVPII). At 462-509 (YQLRSQEKCFLFWSGSKKGSQDKEAMQAYSESLMSPAAKGTVLQEAKL) the chain is on the cytoplasmic side.

It belongs to the CD36 family. In terms of assembly, the C-terminal region binds to PDZK1. In terms of processing, N-glycosylated. Post-translationally, the six cysteines of the extracellular domain are all involved in intramolecular disulfide bonds.

It localises to the cell membrane. Its subcellular location is the membrane. The protein resides in the caveola. Its function is as follows. Receptor for different ligands such as phospholipids, cholesterol ester, lipoproteins, phosphatidylserine and apoptotic cells. Receptor for HDL, mediating selective uptake of cholesteryl ether and HDL-dependent cholesterol efflux. Also facilitates the flux of free and esterified cholesterol between the cell surface and apoB-containing lipoproteins and modified lipoproteins, although less efficiently than HDL. May be involved in the phagocytosis of apoptotic cells, via its phosphatidylserine binding activity. The chain is Scavenger receptor class B member 1 (Scarb1) from Rattus norvegicus (Rat).